Consider the following 185-residue polypeptide: Ribosome-recycling factor (185 aa).

Belongs to the RRF family.

The protein localises to the cytoplasm. Its function is as follows. Responsible for the release of ribosomes from messenger RNA at the termination of protein biosynthesis. May increase the efficiency of translation by recycling ribosomes from one round of translation to another. The polypeptide is Ribosome-recycling factor (Zymomonas mobilis subsp. mobilis (strain ATCC 31821 / ZM4 / CP4)).